We begin with the raw amino-acid sequence, 542 residues long: Protein MGF 505-11L (542 aa).

Belongs to the asfivirus MGF 505 family.

Plays a role in virus cell tropism, and may be required for efficient virus replication in macrophages. In African swine fever virus (isolate Pig/Kenya/KEN-50/1950) (ASFV), this protein is Protein MGF 505-11L.